The following is a 229-amino-acid chain: Cytochrome c oxidase subunit 2 (229 aa).

Residues M1 to Y26 are Mitochondrial intermembrane-facing. Residues A27–S48 form a helical membrane-spanning segment. Residues S49–E62 lie on the Mitochondrial matrix side of the membrane. A helical transmembrane segment spans residues T63–Q82. Residues L83–E229 are Mitochondrial intermembrane-facing. Residues H161, C196, E198, C200, H204, and M207 each coordinate Cu cation. E198 serves as a coordination point for Mg(2+).

It belongs to the cytochrome c oxidase subunit 2 family. In terms of assembly, component of the cytochrome c oxidase (complex IV, CIV), a multisubunit enzyme composed of a catalytic core of 3 subunits and several supernumerary subunits. The complex exists as a monomer or a dimer and forms supercomplexes (SCs) in the inner mitochondrial membrane with ubiquinol-cytochrome c oxidoreductase (cytochrome b-c1 complex, complex III, CIII). Cu cation serves as cofactor.

The protein resides in the mitochondrion inner membrane. The catalysed reaction is 4 Fe(II)-[cytochrome c] + O2 + 8 H(+)(in) = 4 Fe(III)-[cytochrome c] + 2 H2O + 4 H(+)(out). In terms of biological role, component of the cytochrome c oxidase, the last enzyme in the mitochondrial electron transport chain which drives oxidative phosphorylation. The respiratory chain contains 3 multisubunit complexes succinate dehydrogenase (complex II, CII), ubiquinol-cytochrome c oxidoreductase (cytochrome b-c1 complex, complex III, CIII) and cytochrome c oxidase (complex IV, CIV), that cooperate to transfer electrons derived from NADH and succinate to molecular oxygen, creating an electrochemical gradient over the inner membrane that drives transmembrane transport and the ATP synthase. Cytochrome c oxidase is the component of the respiratory chain that catalyzes the reduction of oxygen to water. Electrons originating from reduced cytochrome c in the intermembrane space (IMS) are transferred via the dinuclear copper A center (CU(A)) of subunit 2 and heme A of subunit 1 to the active site in subunit 1, a binuclear center (BNC) formed by heme A3 and copper B (CU(B)). The BNC reduces molecular oxygen to 2 water molecules using 4 electrons from cytochrome c in the IMS and 4 protons from the mitochondrial matrix. The sequence is that of Cytochrome c oxidase subunit 2 (COII) from Paracentrotus lividus (Common sea urchin).